The chain runs to 352 residues: N-acetyl-gamma-glutamyl-phosphate reductase (352 aa).

Residue cysteine 155 is part of the active site.

The protein belongs to the NAGSA dehydrogenase family. Type 1 subfamily.

It is found in the cytoplasm. The enzyme catalyses N-acetyl-L-glutamate 5-semialdehyde + phosphate + NADP(+) = N-acetyl-L-glutamyl 5-phosphate + NADPH + H(+). Its pathway is amino-acid biosynthesis; L-arginine biosynthesis; N(2)-acetyl-L-ornithine from L-glutamate: step 3/4. Functionally, catalyzes the NADPH-dependent reduction of N-acetyl-5-glutamyl phosphate to yield N-acetyl-L-glutamate 5-semialdehyde. The chain is N-acetyl-gamma-glutamyl-phosphate reductase from Acaryochloris marina (strain MBIC 11017).